Reading from the N-terminus, the 383-residue chain is 8-amino-7-oxononanoate synthase (383 aa).

Arg21 is a binding site for substrate. 108–109 (GY) is a pyridoxal 5'-phosphate binding site. Residue His133 coordinates substrate. Pyridoxal 5'-phosphate contacts are provided by Ser179, His207, and Thr233. Lys236 bears the N6-(pyridoxal phosphate)lysine mark. Thr350 contributes to the substrate binding site.

Belongs to the class-II pyridoxal-phosphate-dependent aminotransferase family. BioF subfamily. Homodimer. Requires pyridoxal 5'-phosphate as cofactor.

The catalysed reaction is 6-carboxyhexanoyl-[ACP] + L-alanine + H(+) = (8S)-8-amino-7-oxononanoate + holo-[ACP] + CO2. Its pathway is cofactor biosynthesis; biotin biosynthesis. Functionally, catalyzes the decarboxylative condensation of pimeloyl-[acyl-carrier protein] and L-alanine to produce 8-amino-7-oxononanoate (AON), [acyl-carrier protein], and carbon dioxide. This Yersinia pestis bv. Antiqua (strain Angola) protein is 8-amino-7-oxononanoate synthase.